The primary structure comprises 515 residues: 2,3-bisphosphoglycerate-independent phosphoglycerate mutase (515 aa).

2 residues coordinate Mn(2+): Asp17 and Ser67. Ser67 functions as the Phosphoserine intermediate in the catalytic mechanism. Substrate contacts are provided by residues His128, 157-158 (RD), Arg190, Arg196, 262-265 (RADR), and Lys336. Asp403, His407, Asp444, His445, and His463 together coordinate Mn(2+).

It belongs to the BPG-independent phosphoglycerate mutase family. As to quaternary structure, monomer. Mn(2+) is required as a cofactor.

The enzyme catalyses (2R)-2-phosphoglycerate = (2R)-3-phosphoglycerate. Its pathway is carbohydrate degradation; glycolysis; pyruvate from D-glyceraldehyde 3-phosphate: step 3/5. Its function is as follows. Catalyzes the interconversion of 2-phosphoglycerate and 3-phosphoglycerate. In Acinetobacter baylyi (strain ATCC 33305 / BD413 / ADP1), this protein is 2,3-bisphosphoglycerate-independent phosphoglycerate mutase.